A 423-amino-acid polypeptide reads, in one-letter code: Probable WRKY transcription factor 58 (423 aa).

Disordered stretches follow at residues 91–128 (SSAH…AVHG), 142–171 (RNHY…DGYN), and 215–284 (IYKG…GVST). 2 stretches are compositionally biased toward low complexity: residues 99–111 (QPRQ…PQRP) and 144–162 (HYNN…VVNV). Residues 161–225 (NVDKPADDGY…YKGQHDHERP (65 aa)) constitute a DNA-binding region (WRKY 1). Over residues 259–271 (DDDDDDDEDDEDL) the composition is skewed to acidic residues. The WRKY 2 DNA-binding region spans 300 to 365 (SEVDLLDDGY…YEGKHNHDVP (66 aa)).

It is found in the nucleus. Functionally, transcription factor. Interacts specifically with the W box (5'-(T)TGAC[CT]-3'), a frequently occurring elicitor-responsive cis-acting element. The chain is Probable WRKY transcription factor 58 (WRKY58) from Arabidopsis thaliana (Mouse-ear cress).